Consider the following 21-residue polypeptide: Peptide PGLa-R6 (21 aa).

Leu21 is subject to Leucine amide.

Expressed by the skin glands.

The protein resides in the secreted. Its function is as follows. Antimicrobial peptide. This chain is Peptide PGLa-R6, found in Xenopus ruwenzoriensis (Uganda clawed frog).